A 201-amino-acid polypeptide reads, in one-letter code: Protein S40-5 (201 aa).

Disordered stretches follow at residues Met-1–Glu-39 and Ser-134–Gly-178. The segment covering Gly-17–Ser-29 has biased composition (low complexity).

It belongs to the senescence regulator S40 family.

It is found in the cytoplasm. This is Protein S40-5 from Arabidopsis thaliana (Mouse-ear cress).